The following is a 678-amino-acid chain: Serine/threonine-protein kinase PLK (678 aa).

In terms of domain architecture, Protein kinase spans 22 to 309 (YRPGKLLGKG…VKECLDHSWL (288 aa)). ATP is bound by residues 28–36 (LGKGGFAYV) and K51. D145 serves as the catalytic Proton acceptor. 2 positions are modified to phosphothreonine; by autocatalysis: T179 and T183. POLO box domains follow at residues 435-516 (YIMS…YLEN) and 563-644 (FLKK…IIKA). A disordered region spans residues 658–678 (KDSTKKSASGSSTRQLGQGGE). Polar residues predominate over residues 663–678 (KSASGSSTRQLGQGGE).

It belongs to the protein kinase superfamily. Ser/Thr protein kinase family. CDC5/Polo subfamily. In terms of assembly, interacts with Kin-13. Post-translationally, autophosphorylated. Autophosphorylation is critical for its function in cell growth, cytokinesis and formation of flagella.

It is found in the cell projection. The protein resides in the cilium. Its subcellular location is the flagellum. It localises to the cytoplasm. The protein localises to the cytoskeleton. It is found in the flagellum basal body. The protein resides in the flagellum axoneme. Its subcellular location is the spindle. It localises to the membrane. The enzyme catalyses L-seryl-[protein] + ATP = O-phospho-L-seryl-[protein] + ADP + H(+). It carries out the reaction L-threonyl-[protein] + ATP = O-phospho-L-threonyl-[protein] + ADP + H(+). Inhibited by GW843286X (GW), an ATP-competitive inhibitor. Inhibition leads to reduced growth, increased number of cells with more than four nuclei, increased number of cells with condensed nuclei, cell cycle arrest at G2/M or G1/S phase depending on the treatment time with GW, and increased length of membrane-bound portions of the caudal and anterior flagella. Functionally, involved in cell cycle. Involved in cell division. Involved in cytokinesis. Involved in flagella biogenesis and in regulation of flagella length in interphase. Involved in formation of median bodies during interphase. Phosphorylates Kin-13 in vitro. Likely regulates microtubule (MT) depolymerizing activity of Kin-13. The polypeptide is Serine/threonine-protein kinase PLK (Giardia intestinalis (strain ATCC 50803 / WB clone C6) (Giardia lamblia)).